Consider the following 679-residue polypeptide: MWPRLPGAGLAPQLRRQDQRLHFTGQMSHGLQMAGPQETVLALPLREGVQAAATVPILLYNLEDGLSDHPLDQGPRCPARRPCSPASAPAPTSPKKPKIQAPGETFPTDWSPPPVEFLNPRVLQASREAPAQRWVGVVGPQGLRRLAGELPEELEQEHLDLDPKRGLALPEKLFWNTSGLSQQAAAPEFSWGGSGSYFNNLDYLLQEKREQALEQERERLLLQECLNLNSLDLDEEEVPLTPEHRMLVEKYSVSLQTIPPVHPGETVFLPRCHPLPCILDSSLLKPRSHLEGLFLSSPPAQQLSFLRSGLLNILYLHMPDCPVSLLQWLFQLLTWPPETSLGAFGLLWDLIVDGIFLQPDEDKHLWCPSLQEVREAFHSLGAHSPALYPLGPFWHGGRVLPGEAGLNENEEQDAPQEIALDISLGHIYKFLALCAQAQPGAYTDENLMGLIELLCRTSLDVGLRLLPKVDLQQLLLLLLENIREWPGKLQELCCTLSWVSDHHHNLLALVQFFPDMTSRSRRLRSQLSLVVIARMLGQQEMLPLWQEKTQLSSLSRLLGLMRPSSLRQYLDSVPLPPCQEQQPKASAELDHKACYLCHSLLMLAGVVVSCQDITPDQWGELQLLCMQLDRHISTQIRESPQAMHRTMLKDLATQTYIRWQELLTHCQPQAQYFSPWKDI.

Positions 70–113 are disordered; the sequence is PLDQGPRCPARRPCSPASAPAPTSPKKPKIQAPGETFPTDWSPP. A compositionally biased stretch (low complexity) spans 75 to 90; the sequence is PRCPARRPCSPASAPA.

Belongs to the FAM178 family.

In Homo sapiens (Human), this protein is Protein FAM178B.